The sequence spans 220 residues: Endonuclease NucS (220 aa).

It belongs to the NucS endonuclease family.

It localises to the cytoplasm. Cleaves both 3' and 5' ssDNA extremities of branched DNA structures. The chain is Endonuclease NucS from Parafrankia sp. (strain EAN1pec).